Reading from the N-terminus, the 139-residue chain is MKRNTNVSSSRRKSRKAHFTASSGERRIRMSAALSHDLRTKYNVRSLPIRKDDEVRVVCGDNKNHEGKVVACYRKKYVIHIDKLTVTKTNGNTAQIGVSPSNVILTKLKLDKDRKALLERKNRTVAADKGKVKVSADVN.

Positions 1–25 (MKRNTNVSSSRRKSRKAHFTASSGE) are disordered.

This sequence belongs to the universal ribosomal protein uL24 family.

This is Large ribosomal subunit protein uL24 (rpl26) from Dictyostelium discoideum (Social amoeba).